A 545-amino-acid polypeptide reads, in one-letter code: Chaperonin GroEL (545 aa).

ATP-binding positions include 30-33, lysine 51, 87-91, glycine 415, 479-481, and aspartate 495; these read TLGP, DGTTT, and NAA. The interval 526-545 is disordered; that stretch reads KEDKPDLGNAGAGGNMGGMM. The segment covering 535-545 has biased composition (gly residues); that stretch reads AGAGGNMGGMM.

This sequence belongs to the chaperonin (HSP60) family. In terms of assembly, forms a cylinder of 14 subunits composed of two heptameric rings stacked back-to-back. Interacts with the co-chaperonin GroES.

It localises to the cytoplasm. It catalyses the reaction ATP + H2O + a folded polypeptide = ADP + phosphate + an unfolded polypeptide.. Together with its co-chaperonin GroES, plays an essential role in assisting protein folding. The GroEL-GroES system forms a nano-cage that allows encapsulation of the non-native substrate proteins and provides a physical environment optimized to promote and accelerate protein folding. This chain is Chaperonin GroEL, found in Blochmanniella pennsylvanica (strain BPEN).